The sequence spans 232 residues: Eukaryotic translation initiation factor NCBP (232 aa).

The span at 1–11 shows a compositional bias: basic and acidic residues; that stretch reads MEPAVERKVPE. The interval 1–49 is disordered; it reads MEPAVERKVPEQEEQLQPSHARAEDAPPAAVEEEDEAEAEESERRNREL. Acidic residues predominate over residues 31-41; that stretch reads VEEEDEAEAEE.

The protein belongs to the eukaryotic initiation factor 4E family. EIF4F is a multi-subunit complex, the composition of which varies with external and internal environmental conditions. It is composed of at least EIF4A, EIF4E and EIF4G. EIF4E is also known to interact with other partners. In higher plants two isoforms of EIF4F have been identified, named isoform EIF4F and isoform EIF(iso)4F. Isoform EIF4F has subunits p220 and p26, whereas isoform EIF(iso)4F has subunits p82 and p28.

In terms of biological role, recognizes and binds the 7-methylguanosine-containing mRNA cap during an early step in the initiation of protein synthesis and facilitates ribosome binding by inducing the unwinding of the mRNAs secondary structures. This chain is Eukaryotic translation initiation factor NCBP (NCBP), found in Triticum aestivum (Wheat).